The following is a 335-amino-acid chain: GTPase Obg (335 aa).

Residues 1 to 159 (MQFIDRSEIE…RKLLLELKLL (159 aa)) enclose the Obg domain. One can recognise an OBG-type G domain in the interval 160–328 (AEVGIIGLPN…LLARVWQVLE (169 aa)). GTP is bound by residues 166–173 (GLPNAGKS), 191–195 (FTTLV), 213–216 (DIPG), 280–283 (NKAD), and 309–311 (SAA). Residues Ser-173 and Thr-193 each coordinate Mg(2+).

It belongs to the TRAFAC class OBG-HflX-like GTPase superfamily. OBG GTPase family. In terms of assembly, monomer. It depends on Mg(2+) as a cofactor.

The protein resides in the cytoplasm. Its function is as follows. An essential GTPase which binds GTP, GDP and possibly (p)ppGpp with moderate affinity, with high nucleotide exchange rates and a fairly low GTP hydrolysis rate. Plays a role in control of the cell cycle, stress response, ribosome biogenesis and in those bacteria that undergo differentiation, in morphogenesis control. The sequence is that of GTPase Obg from Gloeobacter violaceus (strain ATCC 29082 / PCC 7421).